A 263-amino-acid polypeptide reads, in one-letter code: Single-stranded DNA-binding protein WHY1, chloroplastic (263 aa).

A chloroplast-targeting transit peptide spans 1–47 (MSQLLSTPLMAVNSNPRFLSSSSVLVTGGFAVKRHGFALKPTTKTVK). The segment at 89 to 94 (KGKAAL) is required for ssDNA binding. Residues 167–180 (KGKSDEGKVRKVLK) carry the Nuclear localization signal motif.

It belongs to the Whirly family. As to quaternary structure, homotetramer.

It is found in the plastid. Its subcellular location is the chloroplast. The protein resides in the nucleus. Functionally, single-stranded DNA-binding protein that functions in both chloroplasts and nucleus. In chloroplasts, maintains plastid genome stability by preventing break-induced and short homology-dependent illegitimate recombinations. In nucleus, modulates telomere length homeostasis by inhibiting the action of the telomerase at the extreme termini of chromosomes. Is recruited to a distal element upstream of the kinesin KP1 to mediate the transcriptional repression of KP1. Is required for full salicylic acid-dependent plant disease resistance responses. Can bind double-stranded DNA in vivo. This is Single-stranded DNA-binding protein WHY1, chloroplastic (WHY1) from Arabidopsis thaliana (Mouse-ear cress).